The following is a 678-amino-acid chain: MAAQRKAQDEYGAASITILEGLEAVRKRPGMYVGSTGERGLHHLIWEVVDNSVDEAMAGYATQVDVRLFDDGSVEVADNGRGIPVAVHATGVPTVDVVMTQLHAGGKFGGKDSGYNVSGGLHGVGVSVVNALSTRVEVDIKRDGYEWSQFYDKAVPGILKQGEATEATGTTIRFWADPDIFETTKYDFGTVARRIQEVAFLNKGLTINLVDERVKQDEVVDDVVSDTAEAPVAMTVEEKSTESSAPHKVRHRTFHYPGGLVDFVKHINRTKTPIQQSIIDFDGKGAGHEVEVAMQWNGGYSESVHTFANTINTHEGGTHEEGFRSALTSVVNKYAKDKKLLKDKDPNLTGDDIREGLAAVISVKVSEPQFEGQTKTKLGNTEVKSFVQRVCNEQLIHWFEANPVDAKAVVNKAISSAQARIAARKARELVRRKSATDLGGLPGKLADCRSTDPRSSELYVVEGDSAGGSAKSGRDSMFQAILPLRGKIINVEKARIDRVLKNTEVQAIITALGTGIHDEFDISRLRYHKIVLMADADVDGQHISTLLLTLLFRFMRPLIEHGYVFLAQPPLYKLKWQRMDPEFAYSDSERDGLLETGLKLGKKINKEDGIQRYKGLGEMDAKELWETTMDPSVRVLRQVTLDDAAAADELFSILMGEDVDARRSFITRNAKDVRFLDV.

Residues 456-570 (SELYVVEGDS…HGYVFLAQPP (115 aa)) enclose the Toprim domain. Residues glutamate 462, aspartate 535, and aspartate 537 each coordinate Mg(2+).

This sequence belongs to the type II topoisomerase GyrB family. As to quaternary structure, heterotetramer, composed of two GyrA and two GyrB chains. In the heterotetramer, GyrA contains the active site tyrosine that forms a transient covalent intermediate with the DNA, while GyrB binds cofactors catalyzes ATP hydrolysis. Mg(2+) is required as a cofactor. It depends on Mn(2+) as a cofactor. Ca(2+) serves as cofactor.

It is found in the cytoplasm. The enzyme catalyses ATP-dependent breakage, passage and rejoining of double-stranded DNA.. With respect to regulation, DNA supercoiling is inhibited by fluoroquinolones; IC(50) 1 ug/ml for sitafloxacin. A type II topoisomerase that negatively supercoils closed circular double-stranded (ds) DNA in an ATP-dependent manner to modulate DNA topology and maintain chromosomes in an underwound state. Negative supercoiling favors strand separation, and DNA replication, transcription, recombination and repair, all of which involve strand separation. Also able to catalyze the interconversion of other topological isomers of dsDNA rings, including catenanes and knotted rings. Type II topoisomerases break and join 2 DNA strands simultaneously in an ATP-dependent manner. This chain is DNA gyrase subunit B, found in Mycobacterium leprae (strain TN).